A 318-amino-acid polypeptide reads, in one-letter code: MFLTNLLMTIAPVLLAVAFLTLVERKILGYMQLRKGPIVVGPYGLLQPISDAVKLFTKEPLRPLTSSTTMFLMAPTLALALALTMWIPLPMPLPLTNMNLSLLFMLAMSSLAVYAILWSGWASNSNYALIGALRAVAQTISYEVTLAIILLSVLLLSGSYSLSTLIITQEYMWLILPSWPLAMMWFISTLAETNRAPFDLTEGESELVSGFNVEYAGGPFALFFLAEYTNIIMMNALTTILFLGAYNNPNTPELYTINFTTKTLLLTMAFLWIRASYPRFRYDQLMHLLWKNFLPLTLALCMWYTALPIITAAIPPQT.

Transmembrane regions (helical) follow at residues 2 to 22 (FLTN…FLTL), 70 to 90 (MFLM…IPLP), 102 to 122 (LLFM…SGWA), 147 to 167 (AIIL…TLII), 171 to 191 (YMWL…STLA), 222 to 242 (LFFL…TILF), 253 to 273 (ELYT…FLWI), and 294 to 314 (LPLT…TAAI).

The protein belongs to the complex I subunit 1 family.

It is found in the mitochondrion inner membrane. The enzyme catalyses a ubiquinone + NADH + 5 H(+)(in) = a ubiquinol + NAD(+) + 4 H(+)(out). In terms of biological role, core subunit of the mitochondrial membrane respiratory chain NADH dehydrogenase (Complex I) that is believed to belong to the minimal assembly required for catalysis. Complex I functions in the transfer of electrons from NADH to the respiratory chain. The immediate electron acceptor for the enzyme is believed to be ubiquinone. This chain is NADH-ubiquinone oxidoreductase chain 1 (MT-ND1), found in Diaemus youngi (White-winged vampire bat).